The following is a 224-amino-acid chain: 7-cyano-7-deazaguanine synthase (224 aa).

11–21 provides a ligand contact to ATP; that stretch reads FSGGQDSTTCL. Zn(2+) contacts are provided by Cys190, Cys199, Cys202, and Cys205.

It belongs to the QueC family. It depends on Zn(2+) as a cofactor.

The enzyme catalyses 7-carboxy-7-deazaguanine + NH4(+) + ATP = 7-cyano-7-deazaguanine + ADP + phosphate + H2O + H(+). It participates in purine metabolism; 7-cyano-7-deazaguanine biosynthesis. Catalyzes the ATP-dependent conversion of 7-carboxy-7-deazaguanine (CDG) to 7-cyano-7-deazaguanine (preQ(0)). The sequence is that of 7-cyano-7-deazaguanine synthase from Parabacteroides distasonis (strain ATCC 8503 / DSM 20701 / CIP 104284 / JCM 5825 / NCTC 11152).